A 95-amino-acid polypeptide reads, in one-letter code: Small ribosomal subunit protein bS18 (95 aa).

It belongs to the bacterial ribosomal protein bS18 family. In terms of assembly, part of the 30S ribosomal subunit. Forms a tight heterodimer with protein bS6.

Its function is as follows. Binds as a heterodimer with protein bS6 to the central domain of the 16S rRNA, where it helps stabilize the platform of the 30S subunit. In Rickettsia typhi (strain ATCC VR-144 / Wilmington), this protein is Small ribosomal subunit protein bS18.